Consider the following 142-residue polypeptide: Deoxyuridine 5'-triphosphate nucleotidohydrolase (142 aa).

Substrate-binding positions include 62-64 (RSG), asparagine 75, and 79-81 (TID).

The protein belongs to the dUTPase family. The cofactor is Mg(2+).

It carries out the reaction dUTP + H2O = dUMP + diphosphate + H(+). Its pathway is pyrimidine metabolism; dUMP biosynthesis; dUMP from dCTP (dUTP route): step 2/2. This enzyme is involved in nucleotide metabolism: it produces dUMP, the immediate precursor of thymidine nucleotides and it decreases the intracellular concentration of dUTP so that uracil cannot be incorporated into DNA. The polypeptide is Deoxyuridine 5'-triphosphate nucleotidohydrolase (Picosynechococcus sp. (strain ATCC 27264 / PCC 7002 / PR-6) (Agmenellum quadruplicatum)).